Reading from the N-terminus, the 212-residue chain is Pyridoxine/pyridoxamine 5'-phosphate oxidase (212 aa).

Residues 8 to 11 and Lys66 contribute to the substrate site; that span reads RREY. FMN-binding positions include 61-66, 76-77, Arg82, Lys83, and Gln105; these read RIVLLK and FT. Positions 123, 127, and 131 each coordinate substrate. FMN contacts are provided by residues 140–141 and Trp185; that span reads QS. Residue 191–193 participates in substrate binding; that stretch reads RLH. Residue Arg195 participates in FMN binding.

It belongs to the pyridoxamine 5'-phosphate oxidase family. In terms of assembly, homodimer. FMN is required as a cofactor.

It carries out the reaction pyridoxamine 5'-phosphate + O2 + H2O = pyridoxal 5'-phosphate + H2O2 + NH4(+). The catalysed reaction is pyridoxine 5'-phosphate + O2 = pyridoxal 5'-phosphate + H2O2. The protein operates within cofactor metabolism; pyridoxal 5'-phosphate salvage; pyridoxal 5'-phosphate from pyridoxamine 5'-phosphate: step 1/1. Its pathway is cofactor metabolism; pyridoxal 5'-phosphate salvage; pyridoxal 5'-phosphate from pyridoxine 5'-phosphate: step 1/1. In terms of biological role, catalyzes the oxidation of either pyridoxine 5'-phosphate (PNP) or pyridoxamine 5'-phosphate (PMP) into pyridoxal 5'-phosphate (PLP). This chain is Pyridoxine/pyridoxamine 5'-phosphate oxidase, found in Shewanella pealeana (strain ATCC 700345 / ANG-SQ1).